We begin with the raw amino-acid sequence, 296 residues long: Light-independent protochlorophyllide reductase iron-sulfur ATP-binding protein (296 aa).

ATP is bound by residues 39–44 (GIGKST) and Lys68. Ser43 provides a ligand contact to Mg(2+). [4Fe-4S] cluster contacts are provided by Cys124 and Cys158. 209–210 (NR) serves as a coordination point for ATP.

The protein belongs to the NifH/BchL/ChlL family. In terms of assembly, homodimer. Protochlorophyllide reductase is composed of three subunits; ChlL, ChlN and ChlB. [4Fe-4S] cluster is required as a cofactor.

It catalyses the reaction chlorophyllide a + oxidized 2[4Fe-4S]-[ferredoxin] + 2 ADP + 2 phosphate = protochlorophyllide a + reduced 2[4Fe-4S]-[ferredoxin] + 2 ATP + 2 H2O. Its pathway is porphyrin-containing compound metabolism; chlorophyll biosynthesis (light-independent). Component of the dark-operative protochlorophyllide reductase (DPOR) that uses Mg-ATP and reduced ferredoxin to reduce ring D of protochlorophyllide (Pchlide) to form chlorophyllide a (Chlide). This reaction is light-independent. The L component serves as a unique electron donor to the NB-component of the complex, and binds Mg-ATP. In Prochlorococcus marinus (strain MIT 9211), this protein is Light-independent protochlorophyllide reductase iron-sulfur ATP-binding protein.